The primary structure comprises 366 residues: Phenylalanine--tRNA ligase alpha subunit (366 aa).

E259 contacts Mg(2+).

Belongs to the class-II aminoacyl-tRNA synthetase family. Phe-tRNA synthetase alpha subunit type 1 subfamily. As to quaternary structure, tetramer of two alpha and two beta subunits. Requires Mg(2+) as cofactor.

The protein localises to the cytoplasm. The enzyme catalyses tRNA(Phe) + L-phenylalanine + ATP = L-phenylalanyl-tRNA(Phe) + AMP + diphosphate + H(+). In Novosphingobium aromaticivorans (strain ATCC 700278 / DSM 12444 / CCUG 56034 / CIP 105152 / NBRC 16084 / F199), this protein is Phenylalanine--tRNA ligase alpha subunit.